We begin with the raw amino-acid sequence, 445 residues long: Acetylcholine-gated chloride channel subunit acc-2 (445 aa).

Residues 1–26 (MIFTLLSTLPVLIITTELDYSELVHS) form the signal peptide. Over 27–258 (AELVSSSSYI…LHVTIIFERR (232 aa)) the chain is Extracellular. Asn-46, Asn-59, Asn-121, and Asn-162 each carry an N-linked (GlcNAc...) asparagine glycan. An intrachain disulfide couples Cys-177 to Cys-191. Asn-218 is a glycosylation site (N-linked (GlcNAc...) asparagine). A helical transmembrane segment spans residues 259–279 (FIWYFMQAYLPTYLTIFISWI). The Cytoplasmic segment spans residues 280–286 (SFSLGSR). Residues 287-307 (AIPARTMLGVNSLLAIVFSFG) form a helical membrane-spanning segment. The Extracellular segment spans residues 308–326 (NIMRNLPRVSYIKGIDVWM). A helical transmembrane segment spans residues 327 to 347 (LVSMTFIFCSLLELAIVGFMV). The Cytoplasmic portion of the chain corresponds to 348 to 407 (RDETVAKKKQQKKISGNISREESPHGIISERRFMFPPGCSESSKSLSSCTSGWTPERIDS). Residues 408–428 (ISSVMFPFSFFVFNIIYWFYY) form a helical membrane-spanning segment. Over 429 to 445 (IHRKEIIKQNLINRVDG) the chain is Extracellular.

Belongs to the ligand-gated ion channel (TC 1.A.9) family. In terms of assembly, homopentamer (in vitro). May interact with either acc-3 or acc-4; the interactions do not result in significant heteropentameric ion channel activity. As to expression, expressed in RIA, RIG, PHA and AIZ glutamatergic neurons, URX and RIH cholinergic neurons, and in male-specific MCM neurons.

The protein resides in the cell membrane. Acetylcholine-gated chloride channel subunit. Currents in channels are triggered in response to acetylcholine. Channel properties may be modulated by the formation of homomeric and heteromeric channels. This Caenorhabditis elegans protein is Acetylcholine-gated chloride channel subunit acc-2.